The sequence spans 621 residues: F-box/LRR-repeat protein 4 (621 aa).

Arginine 28 bears the Asymmetric dimethylarginine mark. One can recognise an F-box domain in the interval 277–332 (NGYFDKLPYELIQLILNHLTLPDLCRLAQTCKLLNQHCCDPLQYIHLNLQPYWAKL). LRR repeat units follow at residues 376–397 (ELVRLELSCSHFLNETCLEIIS), 402–421 (NLQDLNLSSCDKLPPQAFSH), 427–448 (GLKRLVLYRTKVEQTALLSILN), 452–474 (DLQHLSLGSCVMIEDYDVTASMI), 480–501 (KLRTLDLWRCKNITESGIAELA), 504–524 (CPLLEELDLGWCPTLQSSTGC), 532–558 (LPNLQKLFLTANRSVCDTDIEELASNC), 559–583 (TRLRQLDILGTRMVSPASLRKLLES), and 584–609 (CKDLSLLDVSFCSQIDNRAVLELSAS).

In terms of assembly, part of a SCF (SKP1-CUL1-F-box) protein ligase complex. Interacts with FAF2 and VCP. Interacts with PPTC7; this interaction promotes destruction of BNIP3 and NIX and mitophagy suppression.

The protein localises to the cytoplasm. It is found in the nucleus. The protein resides in the mitochondrion outer membrane. Substrate-recognition component of the mitochondria-localized SCF-FBXL4 ubiquitin E3 ligase complex that plays a role in the restriction of mitophagy by controlling the degradation of BNIP3 and NIX mitophagy receptors. Also rescues mitochondrial injury through reverting hyperactivation of DRP1-mediated mitochondrial fission. This Bos taurus (Bovine) protein is F-box/LRR-repeat protein 4 (FBXL4).